Reading from the N-terminus, the 347-residue chain is MTGSFSVKLKSKKGQFIVNDLNEHTTLGELKTKIVQATDIEATQLHVLVGYPPKPLDLSQQQEQRALKAVGINSGETLIVEEKAAPAPAAPVPGGTTVEDDEALARRLQAEEEAQLLQETAGGPVAQAADYQLPVAPTESGPNGDFNGILLKKVVPADNSCLFTSIRFVLNGKVDNEGSEMMRHIIAQEVAADPQSYNDAVLGKSNAEYCAWIQKADSWGGAIEVSILSNYYGIEIDVVDIQNAIINRFGEDKNFGLRVFLLFDGIHYDPLYMETSPSAAPATIFPVEELGVYQQAEQLANEAQSSRQYTNVDKFTLRCMQCDVRLVGQVQAQEHAKQTGHKNFGEI.

A Ubiquitin-like domain is found at F5 to A87. The UBX-like stretch occupies residues K8–A89. The OTU domain maps to L150 to E274. The cys-loop stretch occupies residues V155–C161. D158 is a catalytic residue. C161 serves as the catalytic Nucleophile. A variable-loop region spans residues I213–I223. A his-loop region spans residues F263 to H267. I266 contributes to the substrate binding site. H267 is an active-site residue. The segment at L290–Q295 is S2 site. A C2H2-type zinc finger spans residues L317–H341. Residue H341 is part of the active site.

It catalyses the reaction Thiol-dependent hydrolysis of ester, thioester, amide, peptide and isopeptide bonds formed by the C-terminal Gly of ubiquitin (a 76-residue protein attached to proteins as an intracellular targeting signal).. Its function is as follows. Hydrolase that can remove conjugated ubiquitin from proteins and may therefore play an important regulatory role at the level of protein turnover by preventing degradation. Involved in the regulation of DNA damage repair. In Drosophila melanogaster (Fruit fly), this protein is Ubiquitin thioesterase Otu1.